The sequence spans 481 residues: Anti-sigma-I factor RsgI5 (481 aa).

Over 1-50 (MKHKGIVLKLTKSKAIISTNDFQCYYIKRSPTIYVGKEVEFTNKDIVTKK) the chain is Cytoplasmic. The RsgI N-terminal anti-sigma domain maps to 3–50 (HKGIVLKLTKSKAIISTNDFQCYYIKRSPTIYVGKEVEFTNKDIVTKK). The helical transmembrane segment at 51–71 (SVLIKPALSVACFILLIACVL) threads the bilayer. Topologically, residues 72-481 (SLSKIINNIS…DATFIGIKVD (410 aa)) are extracellular. Residues 255–339 (ASEERNPEES…TPTPTPTPAD (85 aa)) are disordered. Residues 256–265 (SEERNPEESP) are compositionally biased toward basic and acidic residues. Composition is skewed to low complexity over residues 266–283 (KMTP…TPTD) and 291–315 (NTPT…TSTP). Pro residues predominate over residues 316 to 336 (APKPTSTPTPTLMPTPTPTPT).

Interacts (via RsgI N-terminal anti-sigma domain) with SigI5.

Its subcellular location is the cell membrane. Functionally, anti-sigma factor for SigI5. Negatively regulates SigI5 activity through direct interaction. Binding of the polysaccharide substrate to the extracellular C-terminal sensing domain of RsgI5 may induce a conformational change in its N-terminal cytoplasmic region, leading to the release and activation of SigI5. The protein is Anti-sigma-I factor RsgI5 of Acetivibrio thermocellus (strain ATCC 27405 / DSM 1237 / JCM 9322 / NBRC 103400 / NCIMB 10682 / NRRL B-4536 / VPI 7372) (Clostridium thermocellum).